A 418-amino-acid chain; its full sequence is Serine--tRNA ligase (418 aa).

Residue 231–233 (TAE) participates in L-serine binding. Residue 262 to 264 (RSE) coordinates ATP. Glu-285 contributes to the L-serine binding site. 349–352 (EISS) is an ATP binding site. Position 385 (Ser-385) interacts with L-serine.

Belongs to the class-II aminoacyl-tRNA synthetase family. Type-1 seryl-tRNA synthetase subfamily. Homodimer. The tRNA molecule binds across the dimer.

It localises to the cytoplasm. The enzyme catalyses tRNA(Ser) + L-serine + ATP = L-seryl-tRNA(Ser) + AMP + diphosphate + H(+). The catalysed reaction is tRNA(Sec) + L-serine + ATP = L-seryl-tRNA(Sec) + AMP + diphosphate + H(+). It participates in aminoacyl-tRNA biosynthesis; selenocysteinyl-tRNA(Sec) biosynthesis; L-seryl-tRNA(Sec) from L-serine and tRNA(Sec): step 1/1. Its function is as follows. Catalyzes the attachment of serine to tRNA(Ser). Is also able to aminoacylate tRNA(Sec) with serine, to form the misacylated tRNA L-seryl-tRNA(Sec), which will be further converted into selenocysteinyl-tRNA(Sec). The protein is Serine--tRNA ligase of Ureaplasma urealyticum serovar 10 (strain ATCC 33699 / Western).